A 232-amino-acid polypeptide reads, in one-letter code: 2,3-bisphosphoglycerate-dependent phosphoglycerate mutase 1 (232 aa).

Substrate contacts are provided by residues 8–15 (RHGQSLWN), 21–22 (TG), Arg58, 114–117 (ERYY), Lys125, 141–142 (RR), and 185–186 (GN). The active-site Tele-phosphohistidine intermediate is His9. Glu114 functions as the Proton donor/acceptor in the catalytic mechanism.

Belongs to the phosphoglycerate mutase family. BPG-dependent PGAM subfamily.

The catalysed reaction is (2R)-2-phosphoglycerate = (2R)-3-phosphoglycerate. It functions in the pathway carbohydrate degradation; glycolysis; pyruvate from D-glyceraldehyde 3-phosphate: step 3/5. In terms of biological role, catalyzes the interconversion of 2-phosphoglycerate and 3-phosphoglycerate. This is 2,3-bisphosphoglycerate-dependent phosphoglycerate mutase 1 from Gloeobacter violaceus (strain ATCC 29082 / PCC 7421).